The primary structure comprises 369 residues: Choline-phosphate cytidylyltransferase B (369 aa).

The tract at residues 1–27 is disordered; it reads MPVVTTDAESETGIPKSLSNEPPSETM. CTP is bound by residues isoleucine 84, phenylalanine 85, histidine 92, and lysine 122. The phosphocholine site is built by lysine 122 and tryptophan 151. Positions 168, 169, 173, 195, 196, 197, and 200 each coordinate CTP. A disordered region spans residues 309 to 369; sequence RMLQALSPKQ…SMSEGDEDEK (61 aa). A phosphoserine mark is found at serine 315, serine 319, serine 322, serine 323, serine 329, serine 331, and serine 335. Low complexity predominate over residues 319 to 339; sequence SPVSSPTRSRSPSRSPSPTFS. The residue at position 345 (threonine 345) is a Phosphothreonine. Phosphoserine is present on residues serine 346, serine 349, serine 350, serine 355, serine 360, and serine 362. Residues 351-362 are compositionally biased toward low complexity; that stretch reads PKAASASISSMS.

Belongs to the cytidylyltransferase family. Homodimer. In terms of processing, phosphorylated. Post-translationally, extensively phosphorylated. In terms of tissue distribution, highly expressed in testis, placenta, brain, ovary, liver and fetal lung. As to expression, expressed in brain, liver and fetal lung.

It localises to the cytoplasm. Its subcellular location is the endoplasmic reticulum. The catalysed reaction is phosphocholine + CTP + H(+) = CDP-choline + diphosphate. It participates in phospholipid metabolism; phosphatidylcholine biosynthesis; phosphatidylcholine from phosphocholine: step 1/2. Its function is as follows. Catalyzes the key rate-limiting step in the CDP-choline pathway for phosphatidylcholine biosynthesis. This Homo sapiens (Human) protein is Choline-phosphate cytidylyltransferase B (PCYT1B).